The sequence spans 952 residues: Protein translocase subunit SecA (952 aa).

ATP-binding positions include Gln-104, 122–126 (GEGKT), and Asp-512.

It belongs to the SecA family. As to quaternary structure, monomer and homodimer. Part of the essential Sec protein translocation apparatus which comprises SecA, SecYEG and auxiliary proteins SecDF. Other proteins may also be involved.

It localises to the cell inner membrane. The protein localises to the cytoplasm. It carries out the reaction ATP + H2O + cellular proteinSide 1 = ADP + phosphate + cellular proteinSide 2.. Functionally, part of the Sec protein translocase complex. Interacts with the SecYEG preprotein conducting channel. Has a central role in coupling the hydrolysis of ATP to the transfer of proteins into and across the cell membrane, serving as an ATP-driven molecular motor driving the stepwise translocation of polypeptide chains across the membrane. The polypeptide is Protein translocase subunit SecA (Gloeobacter violaceus (strain ATCC 29082 / PCC 7421)).